A 464-amino-acid polypeptide reads, in one-letter code: tRNA modification GTPase MnmE (464 aa).

3 residues coordinate (6S)-5-formyl-5,6,7,8-tetrahydrofolate: Arg-25, Glu-87, and Lys-130. Residues 226–386 (GLSVVLAGQP…LRAELLRIAG (161 aa)) enclose the TrmE-type G domain. Residue Asn-236 coordinates K(+). Residues 236–241 (NVGKSS), 255–261 (TPIAGTT), and 280–283 (DTAG) each bind GTP. Ser-240 provides a ligand contact to Mg(2+). K(+) is bound by residues Thr-255, Ile-257, and Thr-260. A Mg(2+)-binding site is contributed by Thr-261. A (6S)-5-formyl-5,6,7,8-tetrahydrofolate-binding site is contributed by Lys-464.

Belongs to the TRAFAC class TrmE-Era-EngA-EngB-Septin-like GTPase superfamily. TrmE GTPase family. In terms of assembly, homodimer. Heterotetramer of two MnmE and two MnmG subunits. It depends on K(+) as a cofactor.

It localises to the cytoplasm. In terms of biological role, exhibits a very high intrinsic GTPase hydrolysis rate. Involved in the addition of a carboxymethylaminomethyl (cmnm) group at the wobble position (U34) of certain tRNAs, forming tRNA-cmnm(5)s(2)U34. This is tRNA modification GTPase MnmE from Burkholderia ambifaria (strain ATCC BAA-244 / DSM 16087 / CCUG 44356 / LMG 19182 / AMMD) (Burkholderia cepacia (strain AMMD)).